A 410-amino-acid chain; its full sequence is Replication factor C large subunit (410 aa).

Residue 46 to 53 (GDPGTGKT) coordinates ATP.

The protein belongs to the activator 1 small subunits family. RfcL subfamily. As to quaternary structure, heteromultimer composed of small subunits (RfcS) and large subunits (RfcL).

In terms of biological role, part of the RFC clamp loader complex which loads the PCNA sliding clamp onto DNA. The protein is Replication factor C large subunit of Picrophilus torridus (strain ATCC 700027 / DSM 9790 / JCM 10055 / NBRC 100828 / KAW 2/3).